A 661-amino-acid chain; its full sequence is Heme transporter BhuA (661 aa).

The signal sequence occupies residues 1 to 23; it reads MKFTRTLVLASTSLLATVATSQA. One can recognise a TBDR plug domain in the interval 48–159; the sequence is KDNIEATGGT…AAGAIRYETV (112 aa). The TBDR beta-barrel domain maps to 170-661; sequence TFGARIIGSY…TFTFQTAFKF (492 aa).

Belongs to the TonB-dependent receptor family.

Its subcellular location is the cell outer membrane. Functionally, heme transporter. This chain is Heme transporter BhuA (bhuA), found in Brucella ovis (strain ATCC 25840 / 63/290 / NCTC 10512).